A 504-amino-acid chain; its full sequence is Maturase K (504 aa).

This sequence belongs to the intron maturase 2 family. MatK subfamily.

It localises to the plastid. The protein localises to the chloroplast. Usually encoded in the trnK tRNA gene intron. Probably assists in splicing its own and other chloroplast group II introns. The polypeptide is Maturase K (Gossypium barbadense (Sea Island cotton)).